Consider the following 91-residue polypeptide: Large ribosomal subunit protein uL23c (91 aa).

The protein belongs to the universal ribosomal protein uL23 family. Part of the 50S ribosomal subunit.

It localises to the plastid. It is found in the chloroplast. Binds to 23S rRNA. The polypeptide is Large ribosomal subunit protein uL23c (rpl23) (Physcomitrium patens (Spreading-leaved earth moss)).